A 506-amino-acid chain; its full sequence is 2-isopropylmalate synthase (506 aa).

A Pyruvate carboxyltransferase domain is found at 4-266; the sequence is ILFMDTTLRD…EPSMTLKEIK (263 aa). Residues Asp-13, His-201, His-203, and Asn-237 each coordinate Mn(2+). The segment at 390–506 is regulatory domain; the sequence is NITQLQVHFV…KLKSFIQLVK (117 aa).

It belongs to the alpha-IPM synthase/homocitrate synthase family. LeuA type 1 subfamily. As to quaternary structure, homodimer. The cofactor is Mn(2+).

It is found in the cytoplasm. It carries out the reaction 3-methyl-2-oxobutanoate + acetyl-CoA + H2O = (2S)-2-isopropylmalate + CoA + H(+). It functions in the pathway amino-acid biosynthesis; L-leucine biosynthesis; L-leucine from 3-methyl-2-oxobutanoate: step 1/4. Catalyzes the condensation of the acetyl group of acetyl-CoA with 3-methyl-2-oxobutanoate (2-ketoisovalerate) to form 3-carboxy-3-hydroxy-4-methylpentanoate (2-isopropylmalate). The polypeptide is 2-isopropylmalate synthase (Bacillus thuringiensis (strain Al Hakam)).